Here is a 173-residue protein sequence, read N- to C-terminus: Photosystem I assembly protein Ycf3 (173 aa).

3 TPR repeats span residues 35–68 (AFVY…EEDP), 72–105 (SYIL…NPRM), and 120–153 (GEKA…APNN).

The protein belongs to the Ycf3 family.

The protein localises to the cellular thylakoid membrane. Functionally, essential for the assembly of the photosystem I (PSI) complex. May act as a chaperone-like factor to guide the assembly of the PSI subunits. In Microcystis aeruginosa (strain NIES-843 / IAM M-2473), this protein is Photosystem I assembly protein Ycf3.